We begin with the raw amino-acid sequence, 194 residues long: Imidazoleglycerol-phosphate dehydratase (194 aa).

This sequence belongs to the imidazoleglycerol-phosphate dehydratase family.

The protein resides in the cytoplasm. It catalyses the reaction D-erythro-1-(imidazol-4-yl)glycerol 3-phosphate = 3-(imidazol-4-yl)-2-oxopropyl phosphate + H2O. It participates in amino-acid biosynthesis; L-histidine biosynthesis; L-histidine from 5-phospho-alpha-D-ribose 1-diphosphate: step 6/9. This Chlorobaculum parvum (strain DSM 263 / NCIMB 8327) (Chlorobium vibrioforme subsp. thiosulfatophilum) protein is Imidazoleglycerol-phosphate dehydratase.